A 406-amino-acid chain; its full sequence is Phosphatidylinositol 5-phosphate 4-kinase type-2 alpha (406 aa).

Ala2 bears the N-acetylalanine mark. A Phosphothreonine modification is found at Thr3. At Ser14 the chain carries Phosphoserine. The PIPK domain occupies 33–405 (ASDPLLSVLM…RFLDFIGHIL (373 aa)). Positions 59 to 65 (VMLMPDD) are required for interaction with PIP5K1A. N6-acetyllysine occurs at positions 89 and 145. Residues 288-329 (QEEVECEENDGEEEGESDGTHPVGTPPDSPGNTLNSSPPLAP) form a disordered region. The span at 289-304 (EEVECEENDGEEEGES) shows a compositional bias: acidic residues.

As to quaternary structure, homodimer. Interacts with PIP4K2B; the interaction may regulate localization to the nucleus. Probably interacts with PIP5K1A; the interaction inhibits PIP5K1A kinase activity. Phosphorylated in tyrosines. Phosphorylation is induced by light and increases kinase activity. As to expression, expressed ubiquitously, with high levels in the brain. Present in most tissues, except notably skeletal muscle and small intestine.

It localises to the cell membrane. Its subcellular location is the nucleus. The protein resides in the lysosome. The protein localises to the cytoplasm. It is found in the photoreceptor inner segment. It localises to the cell projection. Its subcellular location is the cilium. The protein resides in the photoreceptor outer segment. The catalysed reaction is a 1,2-diacyl-sn-glycero-3-phospho-(1D-myo-inositol-5-phosphate) + ATP = a 1,2-diacyl-sn-glycero-3-phospho-(1D-myo-inositol-4,5-bisphosphate) + ADP + H(+). It carries out the reaction 1,2-dihexadecanoyl-sn-glycero-3-phospho-(1D-myo-inositol-5-phosphate) + ATP = 1,2-dihexadecanoyl-sn-glycero-3-phospho-(1D-myo-inositol-4,5-bisphosphate) + ADP + H(+). The enzyme catalyses 1,2-dihexadecanoyl-sn-glycero-3-phospho-(1D-myo-inositol-5-phosphate) + GTP = 1,2-dihexadecanoyl-sn-glycero-3-phospho-(1D-myo-inositol-4,5-bisphosphate) + GDP + H(+). With respect to regulation, in rod outer segments, activated by light. Inhibited by I-OMe tyrphostin AG-538 (I-OMe-AG-538), acting as an ATP-competitive inhibitor. In terms of biological role, catalyzes the phosphorylation of phosphatidylinositol 5-phosphate (PtdIns5P) on the fourth hydroxyl of the myo-inositol ring, to form phosphatidylinositol 4,5-bisphosphate (PtdIns(4,5)P2). Has both ATP- and GTP-dependent kinase activities. May exert its function by regulating the levels of PtdIns5P, which functions in the cytosol by increasing AKT activity and in the nucleus signals through ING2. May regulate the pool of cytosolic PtdIns5P in response to the activation of tyrosine phosphorylation. Required for lysosome-peroxisome membrane contacts and intracellular cholesterol transport through modulating peroxisomal PtdIns(4,5)P2 level. In collaboration with PIP4K2B, has a role in mediating autophagy in times of nutrient stress. Required for autophagosome-lysosome fusion and the regulation of cellular lipid metabolism. May be involved in thrombopoiesis, and the terminal maturation of megakaryocytes and regulation of their size. Negatively regulates insulin signaling through a catalytic-independent mechanism. PIP4Ks interact with PIP5Ks and suppress PIP5K-mediated PtdIns(4,5)P2 synthesis and insulin-dependent conversion to PtdIns(3,4,5)P3. This Homo sapiens (Human) protein is Phosphatidylinositol 5-phosphate 4-kinase type-2 alpha.